The following is a 471-amino-acid chain: 5-hydroxytryptamine receptor 2A (471 aa).

Residues 1-80 (MDILCEENTS…LQEKNWSALL (80 aa)) lie on the Extracellular side of the membrane. N-linked (GlcNAc...) asparagine glycosylation is found at N8, N38, N44, N51, and N54. A helical membrane pass occupies residues 81 to 97 (TAVVIILTIAGNILVIM). Over 98 to 111 (AVSLEKKLQNATNY) the chain is Cytoplasmic. The chain crosses the membrane as a helical span at residues 112 to 137 (FLMSLAIADMLLGFLVMPVSMLTILY). Residues 138 to 146 (GYRWPLPSK) are Extracellular-facing. A helical transmembrane segment spans residues 147 to 171 (LCAVWIYLDVLFSTASIMHLCAISL). Residues C148 and C227 are joined by a disulfide bond. Residue D155 coordinates serotonin. The DRY motif; important for ligand-induced conformation changes signature appears at 172–174 (DRY). Over 172–191 (DRYVAIQNPIHHSRFNSRTK) the chain is Cytoplasmic. Residues 192-215 (AFLKIIAVWTISVGISMPIPVFGL) traverse the membrane as a helical segment. At 216–232 (QDDSKVFKEGSCLLADD) the chain is on the extracellular side. A helical transmembrane segment spans residues 233-258 (NFVLIGSFVSFFIPLTIMVITYFLTI). Topologically, residues 259–322 (KSLQKEATLC…QSISNEQKAC (64 aa)) are cytoplasmic. S280 bears the Phosphoserine mark. A helical membrane pass occupies residues 323–348 (KVLGIVFFLFVVMWCPFFITNIMAVI). N343 lines the serotonin pocket. Residues C349 and C353 are joined by a disulfide bond. Topologically, residues 349-356 (CKESCNED) are extracellular. A helical membrane pass occupies residues 357 to 382 (VIGALLNVFVWIGYLSSAVNPLVYTL). The NPxxY motif; important for ligand-induced conformation changes and signaling motif lies at 376-380 (NPLVY). At 383-471 (FNKTYRSAFS…DGVNEKVSCV (89 aa)) the chain is on the cytoplasmic side. Positions 450–471 (KQHSEDASKDNSDGVNEKVSCV) are disordered. Residues 451 to 465 (QHSEDASKDNSDGVN) are compositionally biased toward basic and acidic residues. Residues 469 to 471 (SCV) carry the PDZ-binding motif.

This sequence belongs to the G-protein coupled receptor 1 family. As to quaternary structure, interacts (via C-terminus) with MPDZ and PATJ. May interact (via C-terminus) with MPP3, PRDX6, DLG4, DLG1, CASK, APBA1 and MAGI2. Interacts with GRM2 and DRD2; this may affect signaling.

It localises to the cell membrane. Its subcellular location is the cell projection. The protein localises to the dendrite. It is found in the axon. The protein resides in the cytoplasmic vesicle. It localises to the membrane. Its subcellular location is the caveola. The protein localises to the presynapse. G-protein coupled receptor activity is regulated by lipids: oleamide increases HTR2A-mediated activity. G-protein coupled receptor for 5-hydroxytryptamine (serotonin). Also functions as a receptor for various drugs and psychoactive substances, including mescaline, psilocybin, 1-(2,5-dimethoxy-4-iodophenyl)-2-aminopropane (DOI) and lysergic acid diethylamide (LSD). Ligand binding causes a conformation change that triggers signaling via guanine nucleotide-binding proteins (G proteins) and modulates the activity of downstream effectors. HTR2A is coupled to G(q)/G(11) G alpha proteins and activates phospholipase C-beta, releasing diacylglycerol (DAG) and inositol 1,4,5-trisphosphate (IP3) second messengers that modulate the activity of phosphatidylinositol 3-kinase and promote the release of Ca(2+) ions from intracellular stores, respectively. Beta-arrestin family members inhibit signaling via G proteins and mediate activation of alternative signaling pathways. Affects neural activity, perception, cognition and mood. Plays a role in the regulation of behavior, including responses to anxiogenic situations and psychoactive substances. Plays a role in intestinal smooth muscle contraction, and may play a role in arterial vasoconstriction. The chain is 5-hydroxytryptamine receptor 2A (HTR2A) from Macaca mulatta (Rhesus macaque).